The sequence spans 419 residues: D-amino acid dehydrogenase (419 aa).

An FAD-binding site is contributed by 3–17 (VIVLGSGVIGVASAY).

The protein belongs to the DadA oxidoreductase family. FAD is required as a cofactor.

The catalysed reaction is a D-alpha-amino acid + A + H2O = a 2-oxocarboxylate + AH2 + NH4(+). Its pathway is amino-acid degradation; D-alanine degradation; NH(3) and pyruvate from D-alanine: step 1/1. In terms of biological role, oxidative deamination of D-amino acids. This chain is D-amino acid dehydrogenase, found in Acinetobacter baylyi (strain ATCC 33305 / BD413 / ADP1).